The chain runs to 100 residues: Urease subunit gamma (100 aa).

Belongs to the urease gamma subunit family. In terms of assembly, heterotrimer of UreA (gamma), UreB (beta) and UreC (alpha) subunits. Three heterotrimers associate to form the active enzyme.

It is found in the cytoplasm. The enzyme catalyses urea + 2 H2O + H(+) = hydrogencarbonate + 2 NH4(+). The protein operates within nitrogen metabolism; urea degradation; CO(2) and NH(3) from urea (urease route): step 1/1. The protein is Urease subunit gamma of Jannaschia sp. (strain CCS1).